Consider the following 488-residue polypeptide: Probable cytosol aminopeptidase (488 aa).

Positions 253 and 258 each coordinate Mn(2+). K265 is a catalytic residue. Mn(2+) contacts are provided by D276, D335, and E337. R339 is an active-site residue.

It belongs to the peptidase M17 family. The cofactor is Mn(2+).

It localises to the cytoplasm. The enzyme catalyses Release of an N-terminal amino acid, Xaa-|-Yaa-, in which Xaa is preferably Leu, but may be other amino acids including Pro although not Arg or Lys, and Yaa may be Pro. Amino acid amides and methyl esters are also readily hydrolyzed, but rates on arylamides are exceedingly low.. The catalysed reaction is Release of an N-terminal amino acid, preferentially leucine, but not glutamic or aspartic acids.. In terms of biological role, presumably involved in the processing and regular turnover of intracellular proteins. Catalyzes the removal of unsubstituted N-terminal amino acids from various peptides. The polypeptide is Probable cytosol aminopeptidase (Dinoroseobacter shibae (strain DSM 16493 / NCIMB 14021 / DFL 12)).